Consider the following 384-residue polypeptide: G protein-coupled receptor 88 (384 aa).

The Extracellular portion of the chain corresponds to 1–35 (MTNSSSTSTSTTTGGSLLLLCEEEESWAGRRIPVS). Residue N3 is glycosylated (N-linked (GlcNAc...) asparagine). The chain crosses the membrane as a helical span at residues 36 to 56 (LLYSGLAIGGTLANGMVIYLV). At 57–73 (SSFRKLQTTSNAFIVNG) the chain is on the cytoplasmic side. The helical transmembrane segment at 74 to 94 (CAADLSVCALWMPQEAVLGLL) threads the bilayer. The Extracellular portion of the chain corresponds to 95–116 (PAGSAEPPGDWDSGGGSYRLLR). A helical membrane pass occupies residues 117–136 (GGLLGLGLTVSLLSHCLVAL). Residues 137-158 (NRYLLITRAPATYQVLYQRRHT) are Cytoplasmic-facing. Residues 159 to 179 (AGMLALSWALALGLVLLLPPW) form a helical membrane-spanning segment. Residues 180–195 (APKPGAEPPQVHYPAL) are Extracellular-facing. The chain crosses the membrane as a helical span at residues 196 to 216 (LAAGALLAQTALLLHCYLGIV). Residues 217-285 (RRVRVSVKRV…RAQRRLSGLS (69 aa)) are Cytoplasmic-facing. The helical transmembrane segment at 286–306 (VLLLCCVFLLATQPLVWVSLA) threads the bilayer. Residues 307 to 310 (SGFS) are Extracellular-facing. A helical transmembrane segment spans residues 311 to 331 (LPVPWGVQAASWLLCCALSAL). Residues 332 to 384 (NPLLYTWRNEEFRRSVRSVLPGVGDAAAAAAAATAVPAMSQAQLGTRAAGQHW) lie on the Cytoplasmic side of the membrane.

It belongs to the G-protein coupled receptor 1 family. Expressed predominantly in the striatum. Expressed also in olfactory tubercle, nucleus accumbens, amygdala, and neocortex. Spinal cord, pons, and medulla expression remains discrete. Also expressed in peripheral tissues, including adrenal cortex (16 dpc to 21 dpc) and cochlear ganglia (19 dpc to P3) and also at moderate levels in retina (18 dpc to 19 dpc) and spleen (21 dpc to P7).

It localises to the cell membrane. It is found in the cell projection. The protein resides in the cilium membrane. Its subcellular location is the cytoplasm. The protein localises to the nucleus. Orphan G protein-coupled receptor implicated in a large repertoire of behavioral responses that engage motor activities, spatial learning, and emotional processing. May play a role in the regulation of cognitive and motor function. Couples with the heterotrimeric G protein complex of the G(i) subfamily, consisting of GNAI1, GNB1 and GNG2, thereby acting through a G(i)-mediated pathway. Plays a role in the attenuation of D1 dopamine receptor (D1R)-mediated cAMP response in ciliated cells. In non-ciliated cells, involved in the inhibition of the beta-2 adrenergic receptor (B2AR) response. The polypeptide is G protein-coupled receptor 88 (Gpr88) (Rattus norvegicus (Rat)).